Here is a 352-residue protein sequence, read N- to C-terminus: MPKVITLPGDGIGPEVTAAAVQVLREVAPDVTVEEHAIGGGAYDAHGEPFPTSTRDALKEADAVLLGTVGGAHDSAWNQLPRHLRPESGLLALRKALGCYANLRPVRVQPGLEHLSPLKAELARGVDILIVRELLGGIYFDQDRKIEGDTAYNTMRYTTSEVERVAKVAFWAAEQRKGRVTSVDKANVLEVSELWRRDVQALRDRDYRSIHLNHEYVDSVAMLIVADPSRYDVILTENLFGDILSDLAAVIPGSLGLMPSASLGDGAGLFEPIHGSAPDIAGQGVANPAAAIMSVGMLLRHGLERSEAANQVDRAVALALREQPTRDLGGSADTQTFTRAVLKALGSSPSVG.

71–87 lines the NAD(+) pocket; that stretch reads GAHDSAWNQLPRHLRPE. Positions 94, 104, 132, and 218 each coordinate substrate. Positions 218, 242, and 246 each coordinate Mg(2+). 275 to 287 is a binding site for NAD(+); it reads GSAPDIAGQGVAN.

It belongs to the isocitrate and isopropylmalate dehydrogenases family. LeuB type 1 subfamily. Homodimer. Mg(2+) serves as cofactor. The cofactor is Mn(2+).

The protein localises to the cytoplasm. The enzyme catalyses (2R,3S)-3-isopropylmalate + NAD(+) = 4-methyl-2-oxopentanoate + CO2 + NADH. It functions in the pathway amino-acid biosynthesis; L-leucine biosynthesis; L-leucine from 3-methyl-2-oxobutanoate: step 3/4. Functionally, catalyzes the oxidation of 3-carboxy-2-hydroxy-4-methylpentanoate (3-isopropylmalate) to 3-carboxy-4-methyl-2-oxopentanoate. The product decarboxylates to 4-methyl-2 oxopentanoate. This Deinococcus radiodurans (strain ATCC 13939 / DSM 20539 / JCM 16871 / CCUG 27074 / LMG 4051 / NBRC 15346 / NCIMB 9279 / VKM B-1422 / R1) protein is 3-isopropylmalate dehydrogenase.